A 411-amino-acid chain; its full sequence is 2,3-bisphosphoglycerate-independent phosphoglycerate mutase 1 (411 aa).

The protein belongs to the BPG-independent phosphoglycerate mutase family. A-PGAM subfamily. In terms of assembly, homotetramer. The cofactor is Mg(2+).

It catalyses the reaction (2R)-2-phosphoglycerate = (2R)-3-phosphoglycerate. It participates in carbohydrate degradation; glycolysis; pyruvate from D-glyceraldehyde 3-phosphate: step 3/5. Its activity is regulated as follows. Inhibited to approximately 20% by EDTA. Functionally, catalyzes the interconversion of 2-phosphoglycerate and 3-phosphoglycerate. The chain is 2,3-bisphosphoglycerate-independent phosphoglycerate mutase 1 (apgM1) from Methanocaldococcus jannaschii (strain ATCC 43067 / DSM 2661 / JAL-1 / JCM 10045 / NBRC 100440) (Methanococcus jannaschii).